Reading from the N-terminus, the 3574-residue chain is Chromatin structure-remodeling complex protein SYD (3574 aa).

Disordered stretches follow at residues 76 to 105 (SCLPHPGGTQTEDSGSAHLAGSSQAVGVSN), 123 to 211 (TSGR…KIDD), and 328 to 372 (DPKG…TERS). Composition is skewed to polar residues over residues 124–148 (SGRQLGGSNSASQTFYQGSGTQSNR) and 155–168 (PSNLDSTSGISQPH). Basic and acidic residues predominate over residues 169–181 (NRSETMNQRDVKS). Residues 194 to 204 (WDQNMDNSQIF) show a composition bias toward polar residues. A compositionally biased stretch (basic and acidic residues) spans 358-372 (RLDEMDFSSKETERS). An HSA domain is found at 573–647 (QKMKEERQRR…QREKINLLKI (75 aa)). A Helicase ATP-binding domain is found at 766–933 (VSLYNNHLNG…WALLNFLLPN (168 aa)). 779–786 (DEMGLGKT) is an ATP binding site. The short motif at 884–887 (DEGH) is the DEAH box element. Positions 1077–1223 (MLDRMLPKLK…KLGVANQSIT (147 aa)) constitute a Helicase C-terminal domain. Residues 1266-1273 (ARRESEID) carry the Nuclear localization signal motif. Disordered regions lie at residues 1342–1472 (KRKD…VSRT), 1500–1575 (HPTS…SDAE), 1588–1637 (IVSR…SGSH), 1690–1811 (GPVQ…QIEV), 1830–1868 (QPHFSQSVAPDIHSSGSLSQEIRRDTSGTGGSARKQTAD), 2040–2068 (SSLSYVRSEPTASASTTAEPLPTDKLEKN), 2089–2115 (SSEEQTNVNSKIETNSEELQASRTDEV), 2143–2162 (SSMLEPDELPNAGQKGHSSI), 2179–2220 (LDDK…QMED), 2235–2338 (EEKE…DTND), 2350–2451 (EEKE…HMED), 2517–2538 (FESETHARTDSGGIDRGNEVSE), 2684–2703 (SEEIQSPSILPDDVPGQPDD), 2718–2759 (IDIG…RDSR), 2865–2884 (DTEKSKEPGTESADVSLHQL), 3017–3045 (EGTDFSSSLPKTEEENAKSQLADTEPSSS), 3189–3208 (NADSQLANIEPSSSPSVVEK), 3316–3337 (VDDSTGCSSEPQVQLPPSAEPM), and 3512–3574 (TEDT…NEDV). Basic and acidic residues predominate over residues 1362–1371 (AREVRSYEEK). Composition is skewed to polar residues over residues 1399 to 1426 (SLANDTSNIPVENSSDTLLPTSPTQAIT) and 1500 to 1511 (HPTSSLALTSPD). A compositionally biased stretch (basic residues) spans 1532-1546 (GRGRGRSRGRGAGRG). Polar residues-rich tracts occupy residues 1555–1571 (GSNSSITQRTETATSLA) and 1597–1614 (EGSTSNPDQVSPVHSATT). A compositionally biased stretch (basic and acidic residues) spans 1617-1627 (RSDKAADKDLD). Polar residues-rich tracts occupy residues 1690-1699 (GPVQNQNAVS), 1706-1752 (KSPS…STVE), 1796-1806 (DASSARSTGLT), 1832-1849 (HFSQSVAPDIHSSGSLSQ), 2040-2057 (SSLSYVRSEPTASASTTA), and 2090-2110 (SEEQTNVNSKIETNSEELQAS). Residues 2248–2260 (DDADTEQDPEESV) show a composition bias toward acidic residues. Basic and acidic residues predominate over residues 2438–2451 (DRPKDGTADTHMED). Over residues 2718 to 2735 (IDIGITSGKTCQPSSSTQ) the composition is skewed to polar residues. 2 stretches are compositionally biased toward polar residues: residues 3034–3045 (KSQLADTEPSSS) and 3191–3204 (DSQLANIEPSSSPS). Basic and acidic residues predominate over residues 3523–3538 (KTEEKDAENPSDRLDG).

The protein belongs to the SNF2/RAD54 helicase family. As to quaternary structure, interacts with LFY. Binds to BARD1/ROW1. In terms of processing, phosphorylated. As to expression, mostly expressed in rapidly dividing cells in the vegetative, inflorescence, and root meristems, as well as in young leaf and flower primordia. Isoform 1 is predominantly found in seedlings whereas isoform 2 is present in both seedlings and inflorescences (at protein level).

The protein localises to the cytoplasm. The protein resides in the nucleus. In terms of biological role, catalytic component of the chromatin structure-remodeling complex (RSC), which is involved in transcription regulation and nucleosome positioning. Controls stem cell fate via the transcription regulation of WUS in the shoot apical meristem, by modulating its promoter. LFY-dependent repressor of the meristem identity switch from vegetative to reproductive development probably by modulating chromatin state. Involved in the regulation of floral homeotic gene expression in response to environmental stimuli. Required for carpel and ovule development, and for cotyledon separation via the regulation of CUC2 transcription. Regulates the promoters of several genes downstream of the jasmonate (JA) and ethylene (ET) signaling pathways. Required for resistance against the necrotrophic pathogen B.cinerea but not the biotrophic pathogen P.syringae. This Arabidopsis thaliana (Mouse-ear cress) protein is Chromatin structure-remodeling complex protein SYD (SYD).